Here is a 1939-residue protein sequence, read N- to C-terminus: Myosin-4 (1939 aa).

The 50-residue stretch at 33-82 (DAKTSVFVVDPKESYVKAIVQSREGGKVTAKTEAGATVTVKEDQVFSMNP) folds into the Myosin N-terminal SH3-like domain. Residues threonine 64 and threonine 69 each carry the phosphothreonine modification. Serine 79 bears the Phosphoserine mark. A Myosin motor domain is found at 86–782 (DKIEDMAMMT…LLGTLEEMRD (697 aa)). N6,N6,N6-trimethyllysine is present on lysine 130. ATP is bound at residue 179 to 186 (GESGAGKT). Tyrosine 389 carries the phosphotyrosine modification. Residue threonine 391 is modified to Phosphothreonine. The residue at position 392 (serine 392) is a Phosphoserine. Threonine 419 bears the Phosphothreonine mark. The residue at position 424 (tyrosine 424) is a Phosphotyrosine. A Phosphoserine modification is found at serine 625. Positions 659 to 681 (LNKLMTNLRSTHPHFVRCIIPNE) are actin-binding. Histidine 757 is subject to Pros-methylhistidine. The tract at residues 761-775 (KFGHTKVFFKAGLLG) is actin-binding. A Phosphothreonine modification is found at threonine 776. The IQ domain maps to 785 to 814 (LAQLITRTQAICRGFLMRVEFRKMMERRES). Positions 843–1939 (LLKSAETEKE…EVHTKVISEE (1097 aa)) form a coiled coil. Phosphoserine is present on residues serine 1092, serine 1162, and serine 1237. Threonine 1241 bears the Phosphothreonine mark. Phosphoserine is present on serine 1243. Threonine 1255 bears the Phosphothreonine mark. Residue serine 1261 is modified to Phosphoserine. The residue at position 1265 (threonine 1265) is a Phosphothreonine. Phosphoserine is present on serine 1278. Threonine 1286 is subject to Phosphothreonine. Residues serine 1288, serine 1292, serine 1303, serine 1306, and serine 1413 each carry the phosphoserine modification. Tyrosine 1464 carries the phosphotyrosine modification. Phosphothreonine is present on threonine 1467. Position 1474 is a phosphoserine (serine 1474). Tyrosine 1492 is modified (phosphotyrosine). Serine 1495 carries the phosphoserine modification. Threonine 1501 bears the Phosphothreonine mark. Serine 1514 is subject to Phosphoserine. Residue threonine 1517 is modified to Phosphothreonine. Phosphoserine is present on residues serine 1542, serine 1547, serine 1554, serine 1574, serine 1600, serine 1603, serine 1714, and serine 1726. Residues threonine 1730 and threonine 1736 each carry the phosphothreonine modification. Serine 1739 carries the post-translational modification Phosphoserine.

The protein belongs to the TRAFAC class myosin-kinesin ATPase superfamily. Myosin family. As to quaternary structure, muscle myosin is a hexameric protein that consists of 2 heavy chain subunits (MHC), 2 alkali light chain subunits (MLC) and 2 regulatory light chain subunits (MLC-2).

Its subcellular location is the cytoplasm. It is found in the myofibril. In terms of biological role, muscle contraction. This chain is Myosin-4 (MYH4), found in Homo sapiens (Human).